The following is an 81-amino-acid chain: Putative membrane protein insertion efficiency factor 1 (81 aa).

The protein belongs to the UPF0161 family.

The protein resides in the cell membrane. Could be involved in insertion of integral membrane proteins into the membrane. The chain is Putative membrane protein insertion efficiency factor 1 from Bacillus licheniformis (strain ATCC 14580 / DSM 13 / JCM 2505 / CCUG 7422 / NBRC 12200 / NCIMB 9375 / NCTC 10341 / NRRL NRS-1264 / Gibson 46).